The sequence spans 270 residues: ATP synthase subunit a (270 aa).

5 helical membrane passes run 38–58 (VHID…GIFY), 98–118 (IAPL…MDLV), 143–163 (DVNI…YYSI), 208–228 (LFGN…MLPW), and 239–259 (AIFH…LTIV).

The protein belongs to the ATPase A chain family. As to quaternary structure, F-type ATPases have 2 components, CF(1) - the catalytic core - and CF(0) - the membrane proton channel. CF(1) has five subunits: alpha(3), beta(3), gamma(1), delta(1), epsilon(1). CF(0) has three main subunits: a(1), b(2) and c(9-12). The alpha and beta chains form an alternating ring which encloses part of the gamma chain. CF(1) is attached to CF(0) by a central stalk formed by the gamma and epsilon chains, while a peripheral stalk is formed by the delta and b chains.

It is found in the cell inner membrane. Its function is as follows. Key component of the proton channel; it plays a direct role in the translocation of protons across the membrane. The sequence is that of ATP synthase subunit a from Vibrio parahaemolyticus serotype O3:K6 (strain RIMD 2210633).